We begin with the raw amino-acid sequence, 1259 residues long: Lysine-specific demethylase 2B (1259 aa).

In terms of domain architecture, JmjC spans 147 to 315; the sequence is FSHTKLERVV…MQLRVFEIED (169 aa). A substrate-binding site is contributed by threonine 208. Histidine 211 and aspartate 213 together coordinate Fe cation. Lysine 228 provides a ligand contact to substrate. Histidine 283 serves as a coordination point for Fe cation. Residues 388–402 are compositionally biased toward basic and acidic residues; sequence EEKGNLVEKPSKQSG. Disordered stretches follow at residues 388–463 and 536–562; these read EEKG…ATDM and KPSK…SANR. Positions 403 to 413 are enriched in polar residues; it reads DESSTTNSTHS. Residues 414–423 are compositionally biased toward basic and acidic residues; sequence NGKDAAEKKQ. Residues 426–437 show a composition bias toward polar residues; it reads TLMQQLKRTLSN. A compositionally biased stretch (basic residues) spans 536-548; sequence KPSKNRAVGRPKG. The segment at 567–613 adopts a CXXC-type zinc-finger fold; it reads ARRRRTRCRKCEACLRTECGECHFCKDMKKFGGPGRMKQSCIMRQCI. The Zn(2+) site is built by cysteine 574, cysteine 577, cysteine 580, cysteine 585, cysteine 588, cysteine 591, cysteine 607, cysteine 612, cysteine 623, cysteine 626, cysteine 649, cysteine 652, histidine 657, cysteine 660, cysteine 680, and cysteine 683. A PHD-type zinc finger spans residues 620–686; sequence TAVCLVCGEA…CWECPKCNHA (67 aa). Composition is skewed to basic and acidic residues over residues 729 to 763 and 771 to 790; these read KKKV…EDGH and EKPP…EEKL. Residues 729-958 form a disordered region; that stretch reads KKKVEREETP…PPPSLSPPKC (230 aa). Over residues 835–848 the composition is skewed to polar residues; that stretch reads SRSSSPTAGPSTEG. A compositionally biased stretch (basic residues) spans 854 to 863; that stretch reads KKKIRRKRRV. The segment covering 864 to 877 has biased composition (basic and acidic residues); the sequence is SNKELSKELSKELN. The stretch at 864 to 891 forms a coiled coil; the sequence is SNKELSKELSKELNQEIQKTESSLASEN. Residues 878-889 are compositionally biased toward polar residues; it reads QEIQKTESSLAS. Residues 890 to 908 show a composition bias toward basic and acidic residues; it reads ENHHPIKSEPESDNEESKK. The 46-residue stretch at 985 to 1030 folds into the F-box domain; that stretch reads AHVMQREVWMAIFSYLSHRDLCICMRICRTWNRWCCDKRLWTQIDL. LRR repeat units follow at residues 1056–1081, 1082–1105, 1145–1170, 1171–1200, and 1201–1225; these read WTNI…NLSG, CSWI…NVQW, GLDI…DLSY, CNHV…NLSD, and CNNV…DLRF.

It belongs to the JHDM1 histone demethylase family. Fe(2+) is required as a cofactor.

It localises to the nucleus. The protein localises to the nucleolus. It is found in the chromosome. The enzyme catalyses N(6),N(6)-dimethyl-L-lysyl(36)-[histone H3] + 2 2-oxoglutarate + 2 O2 = L-lysyl(36)-[histone H3] + 2 formaldehyde + 2 succinate + 2 CO2. Its activity is regulated as follows. Histone demethylase activity is inhibited by fumarate. Histone demethylase that demethylates 'Lys-4' and 'Lys-36' of histone H3, thereby playing a central role in histone code. Preferentially demethylates trimethylated H3 'Lys-4' and dimethylated H3 'Lys-36' residue while it has weak or no activity for mono- and tri-methylated H3 'Lys-36'. Preferentially binds the transcribed region of ribosomal RNA and represses the transcription of ribosomal RNA genes which inhibits cell growth and proliferation. This Xenopus laevis (African clawed frog) protein is Lysine-specific demethylase 2B (kdm2b).